The sequence spans 158 residues: Small ribosomal subunit protein uS7 (158 aa).

Belongs to the universal ribosomal protein uS7 family. In terms of assembly, part of the 30S ribosomal subunit. Contacts proteins S9 and S11.

Functionally, one of the primary rRNA binding proteins, it binds directly to 16S rRNA where it nucleates assembly of the head domain of the 30S subunit. Is located at the subunit interface close to the decoding center, probably blocks exit of the E-site tRNA. The chain is Small ribosomal subunit protein uS7 from Parabacteroides distasonis (strain ATCC 8503 / DSM 20701 / CIP 104284 / JCM 5825 / NCTC 11152).